The following is a 487-amino-acid chain: Probable Xaa-Pro aminopeptidase MGYG_06974 (487 aa).

Mn(2+) is bound by residues D255, D266, E414, and E458.

The protein belongs to the peptidase M24B family. Requires Mn(2+) as cofactor.

The enzyme catalyses Release of any N-terminal amino acid, including proline, that is linked to proline, even from a dipeptide or tripeptide.. Functionally, catalyzes the removal of a penultimate prolyl residue from the N-termini of peptides. This is Probable Xaa-Pro aminopeptidase MGYG_06974 from Arthroderma gypseum (strain ATCC MYA-4604 / CBS 118893) (Microsporum gypseum).